We begin with the raw amino-acid sequence, 305 residues long: Auxin-responsive protein IAA27 (305 aa).

Residues 45–49 carry the EAR-like (transcriptional repression) motif; the sequence is LRLGL. Disordered regions lie at residues 96 to 119 and 155 to 180; these read TTATGDVGSGSGPRTSVVKDGKST and KNSMASSQSQKPGNNSETEEAEAKSG. Residues 155–170 show a composition bias toward polar residues; it reads KNSMASSQSQKPGNNS. One can recognise a PB1 domain in the interval 185 to 287; that stretch reads CLYVKVSMEG…SCKKLRIMKS (103 aa).

This sequence belongs to the Aux/IAA family. In terms of assembly, homodimers and heterodimers. Interacts with phytochrome A. Interacts with TPL.

It is found in the nucleus. Its function is as follows. Aux/IAA proteins are short-lived transcriptional factors that function as repressors of early auxin response genes at low auxin concentrations. Repression is thought to result from the interaction with auxin response factors (ARFs), proteins that bind to the auxin-responsive promoter element (AuxRE). Formation of heterodimers with ARF proteins may alter their ability to modulate early auxin response genes expression. The protein is Auxin-responsive protein IAA27 (IAA27) of Arabidopsis thaliana (Mouse-ear cress).